A 242-amino-acid polypeptide reads, in one-letter code: MGHKIHPTGLRLGITQEHRSRWYASSKTYPSLLQEDDRIRKFIHKKYGSAGISDVLIARKADQLEVELKTARPGVLVGRQGSGIEDLRAGIQKTVGDKSRQVRINVVEVERVDGDAFLLAEYIAQQLEKRVAFRRTIRMAVQRAQRAGVLGLKIQVSGRLNGAEIARTEWTREGRVPLHTLRADIDYATKVGKTTYGVLGIKVWVFKGEVLNEQSQTMPVGANPRRRASRRPQQFEDRSNEG.

Positions 39 to 110 (IRKFIHKKYG…QVRINVVEVE (72 aa)) constitute a KH type-2 domain. The tract at residues 216 to 242 (QTMPVGANPRRRASRRPQQFEDRSNEG) is disordered. The span at 233-242 (QQFEDRSNEG) shows a compositional bias: basic and acidic residues.

Belongs to the universal ribosomal protein uS3 family. As to quaternary structure, part of the 30S ribosomal subunit. Forms a tight complex with proteins S10 and S14.

Its function is as follows. Binds the lower part of the 30S subunit head. Binds mRNA in the 70S ribosome, positioning it for translation. In Synechococcus sp. (strain CC9902), this protein is Small ribosomal subunit protein uS3.